Consider the following 37-residue polypeptide: Large ribosomal subunit protein bL36 (37 aa).

It belongs to the bacterial ribosomal protein bL36 family.

The sequence is that of Large ribosomal subunit protein bL36 from Streptomyces avermitilis (strain ATCC 31267 / DSM 46492 / JCM 5070 / NBRC 14893 / NCIMB 12804 / NRRL 8165 / MA-4680).